Consider the following 170-residue polypeptide: Methanogen homoaconitase small subunit (170 aa).

The short motif at 24-27 (YLRT) is the YLRT element.

The protein belongs to the LeuD family. LeuD type 2 subfamily. Heterotetramer of 2 HacA and 2 HacB proteins. Cannot form a complex with LeuC.

The catalysed reaction is (2R)-homocitrate = (2R,3S)-homoisocitrate. It carries out the reaction (2R)-homocitrate = cis-homoaconitate + H2O. The enzyme catalyses (2R,3S)-homoisocitrate = cis-homoaconitate + H2O. It catalyses the reaction cis-(homo)2aconitate + H2O = (2R,3S)-iso(homo)2citrate. The catalysed reaction is cis-(homo)3aconitate + H2O = (2R,3S)-iso(homo)3citrate. It carries out the reaction (R)-malate = maleate + H2O. The enzyme catalyses cis-aconitate + H2O = D-threo-isocitrate. It functions in the pathway organic acid metabolism; 2-oxosuberate biosynthesis. Functionally, component of a hydro-lyase with broad substrate specificity for cis-unsaturated tricarboxylic acids. Catalyzes both the reversible dehydration of (R)-homocitrate ((R)-2-hydroxybutane-1,2,4-tricarboxylate) to produce cis-homoaconitate ((Z)-but-1-ene-1,2,4-tricarboxylate), and its hydration to homoisocitrate ((1R,2S)-1-hydroxybutane-1,2,4-tricarboxylate). Is also able to hydrate the analogous longer chain substrates cis-homo(2)-aconitate, cis-homo(3)-aconitate, and even the non-physiological cis-homo(4)-aconitate with similar efficiency. These reactions are part of the biosynthesis pathway of coenzyme B. Can also catalyze the hydration of maleate to (R)-malate, and that of cis-aconitate. Cannot catalyze the hydration of citraconate and the dehydration of (S)-homocitrate, citramalate, 2-isopropylmalate, 3-isopropylmalate, citrate or threo-DL-isocitrate. This chain is Methanogen homoaconitase small subunit (hacB), found in Methanocaldococcus jannaschii (strain ATCC 43067 / DSM 2661 / JAL-1 / JCM 10045 / NBRC 100440) (Methanococcus jannaschii).